Consider the following 493-residue polypeptide: Transcription termination factor MTERF5, chloroplastic (493 aa).

A chloroplast-targeting transit peptide spans 1 to 43; it reads MQSLSQLGPSEIFLVARREKPSTRAQLWFTGRLSFRQETNGIR.

It belongs to the mTERF family. As to quaternary structure, interacts with pTAC6. Expressed in roots, rosette leaves, cauline leaves, stems, flower buds and open flowers.

The protein localises to the plastid. It localises to the chloroplast. Its function is as follows. Transcription termination factor required for processing and steady-state levels of plastid transcripts. Involved also in chloroplast transcriptional pausing, a general feature of chloroplast genes. Specifically and positively regulates the transcription of chloroplast psbEFLJ encoding for photosystem II (PSII) core subunits psbE, psbF, psbL and psbJ; causes the plastid-encoded RNA polymerase (PEP) complex to pause at psbEFLJ by binding to the +30 to +51 region of double-stranded DNA, and recruits additional pTAC6 to the transcriptionally paused region of psbEFLJ. May play a role in response to abiotic stresses. This chain is Transcription termination factor MTERF5, chloroplastic, found in Arabidopsis thaliana (Mouse-ear cress).